A 638-amino-acid polypeptide reads, in one-letter code: Threonine--tRNA ligase (638 aa).

The region spanning 1–59 (MEKIKVKIKGKEYEVEKGTPLGKIFELAGIKDALGGVINGKIIDLQTPVRESGEIKPVY) is the TGS domain. The catalytic stretch occupies residues 243-536 (DHRRLGKELE…LLEHYAGLLP (294 aa)). Zn(2+)-binding residues include cysteine 336, histidine 387, and histidine 513.

This sequence belongs to the class-II aminoacyl-tRNA synthetase family. In terms of assembly, homodimer. Zn(2+) serves as cofactor.

It is found in the cytoplasm. It catalyses the reaction tRNA(Thr) + L-threonine + ATP = L-threonyl-tRNA(Thr) + AMP + diphosphate + H(+). In terms of biological role, catalyzes the attachment of threonine to tRNA(Thr) in a two-step reaction: L-threonine is first activated by ATP to form Thr-AMP and then transferred to the acceptor end of tRNA(Thr). Also edits incorrectly charged L-seryl-tRNA(Thr). This Aquifex aeolicus (strain VF5) protein is Threonine--tRNA ligase.